Consider the following 309-residue polypeptide: Electron transfer flavoprotein subunit alpha (309 aa).

253-281 (LYIAVGISGAIQHLAGMKDSKVIVAINKD) serves as a coordination point for FAD.

Belongs to the ETF alpha-subunit/FixB family. In terms of assembly, heterodimer of an alpha and a beta subunit. It depends on FAD as a cofactor.

Its function is as follows. The electron transfer flavoprotein serves as a specific electron acceptor for other dehydrogenases. It transfers the electrons to the main respiratory chain via ETF-ubiquinone oxidoreductase (ETF dehydrogenase). The chain is Electron transfer flavoprotein subunit alpha (etfA) from Pseudomonas aeruginosa (strain ATCC 15692 / DSM 22644 / CIP 104116 / JCM 14847 / LMG 12228 / 1C / PRS 101 / PAO1).